The following is a 215-amino-acid chain: Oligoribonuclease (215 aa).

The region spanning L5 to L170 is the Exonuclease domain. Y127 is an active-site residue. The disordered stretch occupies residues L196–G215. Positions A202–G215 are enriched in low complexity.

Belongs to the oligoribonuclease family.

Its subcellular location is the cytoplasm. Functionally, 3'-to-5' exoribonuclease specific for small oligoribonucleotides. This chain is Oligoribonuclease, found in Mycobacterium avium (strain 104).